The chain runs to 402 residues: Protein rds1 (402 aa).

Its function is as follows. May have a function in stress-related responses of the cell. The sequence is that of Protein rds1 (rds1) from Schizosaccharomyces pombe (strain 972 / ATCC 24843) (Fission yeast).